The primary structure comprises 1379 residues: DNA-directed RNA polymerase subunit beta (1379 aa).

Belongs to the RNA polymerase beta chain family. As to quaternary structure, in plastids the minimal PEP RNA polymerase catalytic core is composed of four subunits: alpha, beta, beta', and beta''. When a (nuclear-encoded) sigma factor is associated with the core the holoenzyme is formed, which can initiate transcription.

The protein localises to the plastid. It localises to the chloroplast. It carries out the reaction RNA(n) + a ribonucleoside 5'-triphosphate = RNA(n+1) + diphosphate. In terms of biological role, DNA-dependent RNA polymerase catalyzes the transcription of DNA into RNA using the four ribonucleoside triphosphates as substrates. The protein is DNA-directed RNA polymerase subunit beta of Trieres chinensis (Marine centric diatom).